Here is a 519-residue protein sequence, read N- to C-terminus: Histidine ammonia-lyase (519 aa).

Positions 146–148 (ASG) form a cross-link, 5-imidazolinone (Ala-Gly). Serine 147 is subject to 2,3-didehydroalanine (Ser).

It belongs to the PAL/histidase family. In terms of processing, contains an active site 4-methylidene-imidazol-5-one (MIO), which is formed autocatalytically by cyclization and dehydration of residues Ala-Ser-Gly.

It localises to the cytoplasm. It catalyses the reaction L-histidine = trans-urocanate + NH4(+). It participates in amino-acid degradation; L-histidine degradation into L-glutamate; N-formimidoyl-L-glutamate from L-histidine: step 1/3. The protein is Histidine ammonia-lyase of Bradyrhizobium diazoefficiens (strain JCM 10833 / BCRC 13528 / IAM 13628 / NBRC 14792 / USDA 110).